A 339-amino-acid chain; its full sequence is Ketol-acid reductoisomerase (NADP(+)) (339 aa).

The KARI N-terminal Rossmann domain maps to 1–182 (MRVYYDRDAD…GGGRSGIIET (182 aa)). NADP(+) is bound by residues 24–27 (YGSQ), R48, S51, S53, and 83–86 (DELQ). The active site involves H108. Position 134 (G134) interacts with NADP(+). Residues 183-328 (TFREECETDL…EKLRAMMPWI (146 aa)) enclose the KARI C-terminal knotted domain. The Mg(2+) site is built by D191, E195, E227, and E231. S252 lines the substrate pocket.

Belongs to the ketol-acid reductoisomerase family. It depends on Mg(2+) as a cofactor.

It catalyses the reaction (2R)-2,3-dihydroxy-3-methylbutanoate + NADP(+) = (2S)-2-acetolactate + NADPH + H(+). The catalysed reaction is (2R,3R)-2,3-dihydroxy-3-methylpentanoate + NADP(+) = (S)-2-ethyl-2-hydroxy-3-oxobutanoate + NADPH + H(+). Its pathway is amino-acid biosynthesis; L-isoleucine biosynthesis; L-isoleucine from 2-oxobutanoate: step 2/4. It functions in the pathway amino-acid biosynthesis; L-valine biosynthesis; L-valine from pyruvate: step 2/4. Involved in the biosynthesis of branched-chain amino acids (BCAA). Catalyzes an alkyl-migration followed by a ketol-acid reduction of (S)-2-acetolactate (S2AL) to yield (R)-2,3-dihydroxy-isovalerate. In the isomerase reaction, S2AL is rearranged via a Mg-dependent methyl migration to produce 3-hydroxy-3-methyl-2-ketobutyrate (HMKB). In the reductase reaction, this 2-ketoacid undergoes a metal-dependent reduction by NADPH to yield (R)-2,3-dihydroxy-isovalerate. The chain is Ketol-acid reductoisomerase (NADP(+)) from Chelativorans sp. (strain BNC1).